The chain runs to 479 residues: Ribosomal RNA small subunit methyltransferase F (479 aa).

Residues 125-131 (AAAPGSK), E149, D176, and D194 each bind S-adenosyl-L-methionine. The Nucleophile role is filled by C247.

This sequence belongs to the class I-like SAM-binding methyltransferase superfamily. RsmB/NOP family.

It localises to the cytoplasm. It catalyses the reaction cytidine(1407) in 16S rRNA + S-adenosyl-L-methionine = 5-methylcytidine(1407) in 16S rRNA + S-adenosyl-L-homocysteine + H(+). In terms of biological role, specifically methylates the cytosine at position 1407 (m5C1407) of 16S rRNA. The polypeptide is Ribosomal RNA small subunit methyltransferase F (Salmonella enteritidis PT4 (strain P125109)).